The following is a 283-amino-acid chain: 32 kDa beta-galactoside-binding lectin (283 aa).

Galectin domains follow at residues 17 to 148 and 156 to 283; these read YRSL…VHWG and YESG…IQIQ. 217 to 223 contacts a beta-D-galactoside; the sequence is WGNEERE.

(Microbial infection) Interacts (via domain galectin 2) with goat TMEM147. Interacts (via domain galectin 1) with goat TMEM63A.

It is found in the membrane. In terms of biological role, binds galactose. Exerts immunomodulatory effects on host peripheral blood mononuclear cells to down-regulate host immune response. Hemagglutinates human, dog, rabbit, chicken and mouse erythrocytes but does not hemagglutinate the erythrocytes of goat, its natural host. In Haemonchus contortus (Barber pole worm), this protein is 32 kDa beta-galactoside-binding lectin (GAL-1).